A 369-amino-acid chain; its full sequence is Glutamate 5-kinase (369 aa).

K9 contributes to the ATP binding site. Residues S49, D136, and N148 each coordinate substrate. Residues 168-169 (TD) and 210-216 (TGGMLTK) each bind ATP. One can recognise a PUA domain in the interval 275-355 (QGSIWVDKGA…KGVLIYRDDW (81 aa)).

Belongs to the glutamate 5-kinase family.

It localises to the cytoplasm. It catalyses the reaction L-glutamate + ATP = L-glutamyl 5-phosphate + ADP. It functions in the pathway amino-acid biosynthesis; L-proline biosynthesis; L-glutamate 5-semialdehyde from L-glutamate: step 1/2. Functionally, catalyzes the transfer of a phosphate group to glutamate to form L-glutamate 5-phosphate. This chain is Glutamate 5-kinase, found in Streptococcus pneumoniae serotype 4 (strain ATCC BAA-334 / TIGR4).